Here is a 263-residue protein sequence, read N- to C-terminus: Proteasome subunit alpha type-1 (263 aa).

An N-acetylmethionine modification is found at M1. At S110 the chain carries Phosphoserine; alternate. S110 carries an O-linked (GlcNAc) serine; alternate glycan. A Glycyl lysine isopeptide (Lys-Gly) (interchain with G-Cter in ubiquitin) cross-link involves residue K115. Position 177 is a phosphoserine (S177). A Glycyl lysine isopeptide (Lys-Gly) (interchain with G-Cter in ubiquitin) cross-link involves residue K208. Positions 232 to 263 (FLEGLEERPQRKAQPAQPADEPAEKADEPMEH) are disordered. Residues 253–263 (PAEKADEPMEH) show a composition bias toward basic and acidic residues.

The protein belongs to the peptidase T1A family. In terms of assembly, the 26S proteasome consists of a 20S proteasome core and two 19S regulatory subunits. The 20S proteasome core is a barrel-shaped complex made of 28 subunits that are arranged in four stacked rings. The two outer rings are each formed by seven alpha subunits, and the two inner rings are formed by seven beta subunits. The proteolytic activity is exerted by three beta-subunits PSMB5, PSMB6 and PSMB7. Interacts with NOTCH3. Interacts with ZFAND1.

The protein localises to the cytoplasm. The protein resides in the nucleus. Functionally, component of the 20S core proteasome complex involved in the proteolytic degradation of most intracellular proteins. This complex plays numerous essential roles within the cell by associating with different regulatory particles. Associated with two 19S regulatory particles, forms the 26S proteasome and thus participates in the ATP-dependent degradation of ubiquitinated proteins. The 26S proteasome plays a key role in the maintenance of protein homeostasis by removing misfolded or damaged proteins that could impair cellular functions, and by removing proteins whose functions are no longer required. Associated with the PA200 or PA28, the 20S proteasome mediates ubiquitin-independent protein degradation. This type of proteolysis is required in several pathways including spermatogenesis (20S-PA200 complex) or generation of a subset of MHC class I-presented antigenic peptides (20S-PA28 complex). The protein is Proteasome subunit alpha type-1 (PSMA1) of Macaca fascicularis (Crab-eating macaque).